Reading from the N-terminus, the 567-residue chain is Urease subunit alpha (567 aa).

The region spanning 129–567 (GGIDSHIHFI…LPMAQRYFLF (439 aa)) is the Urease domain. Positions 134, 136, and 217 each coordinate Ni(2+). Lys217 is subject to N6-carboxylysine. Position 219 (His219) interacts with substrate. Residues His246 and His272 each coordinate Ni(2+). His320 (proton donor) is an active-site residue. Asp360 is a Ni(2+) binding site.

This sequence belongs to the metallo-dependent hydrolases superfamily. Urease alpha subunit family. In terms of assembly, heterotrimer of UreA (gamma), UreB (beta) and UreC (alpha) subunits. Three heterotrimers associate to form the active enzyme. The cofactor is Ni cation. Carboxylation allows a single lysine to coordinate two nickel ions.

It is found in the cytoplasm. It catalyses the reaction urea + 2 H2O + H(+) = hydrogencarbonate + 2 NH4(+). It functions in the pathway nitrogen metabolism; urea degradation; CO(2) and NH(3) from urea (urease route): step 1/1. The protein is Urease subunit alpha of Alcanivorax borkumensis (strain ATCC 700651 / DSM 11573 / NCIMB 13689 / SK2).